The sequence spans 237 residues: 1-(5-phosphoribosyl)-5-[(5-phosphoribosylamino)methylideneamino] imidazole-4-carboxamide isomerase (237 aa).

The Proton acceptor role is filled by aspartate 8. Aspartate 130 (proton donor) is an active-site residue.

It belongs to the HisA/HisF family.

The protein localises to the cytoplasm. The enzyme catalyses 1-(5-phospho-beta-D-ribosyl)-5-[(5-phospho-beta-D-ribosylamino)methylideneamino]imidazole-4-carboxamide = 5-[(5-phospho-1-deoxy-D-ribulos-1-ylimino)methylamino]-1-(5-phospho-beta-D-ribosyl)imidazole-4-carboxamide. It participates in amino-acid biosynthesis; L-histidine biosynthesis; L-histidine from 5-phospho-alpha-D-ribose 1-diphosphate: step 4/9. This Caldicellulosiruptor saccharolyticus (strain ATCC 43494 / DSM 8903 / Tp8T 6331) protein is 1-(5-phosphoribosyl)-5-[(5-phosphoribosylamino)methylideneamino] imidazole-4-carboxamide isomerase.